The primary structure comprises 131 residues: Small ribosomal subunit protein uS8 (131 aa).

Belongs to the universal ribosomal protein uS8 family. Part of the 30S ribosomal subunit. Contacts proteins S5 and S12.

Its function is as follows. One of the primary rRNA binding proteins, it binds directly to 16S rRNA central domain where it helps coordinate assembly of the platform of the 30S subunit. This is Small ribosomal subunit protein uS8 from Janthinobacterium sp. (strain Marseille) (Minibacterium massiliensis).